The sequence spans 434 residues: Methylenetetrahydrofolate--tRNA-(uracil-5-)-methyltransferase TrmFO (434 aa).

10 to 15 (GAGLAG) contributes to the FAD binding site.

This sequence belongs to the MnmG family. TrmFO subfamily. FAD serves as cofactor.

It is found in the cytoplasm. The catalysed reaction is uridine(54) in tRNA + (6R)-5,10-methylene-5,6,7,8-tetrahydrofolate + NADH + H(+) = 5-methyluridine(54) in tRNA + (6S)-5,6,7,8-tetrahydrofolate + NAD(+). It carries out the reaction uridine(54) in tRNA + (6R)-5,10-methylene-5,6,7,8-tetrahydrofolate + NADPH + H(+) = 5-methyluridine(54) in tRNA + (6S)-5,6,7,8-tetrahydrofolate + NADP(+). Its function is as follows. Catalyzes the folate-dependent formation of 5-methyl-uridine at position 54 (M-5-U54) in all tRNAs. This is Methylenetetrahydrofolate--tRNA-(uracil-5-)-methyltransferase TrmFO from Bacillus cereus (strain AH820).